The sequence spans 167 residues: NAD(P)H-quinone oxidoreductase subunit I, chloroplastic (167 aa).

2 consecutive 4Fe-4S ferredoxin-type domains span residues 55–84 (GRIH…VDWK) and 95–124 (LNYS…MTEE). Residues Cys-64, Cys-67, Cys-70, Cys-74, Cys-104, Cys-107, Cys-110, and Cys-114 each contribute to the [4Fe-4S] cluster site.

This sequence belongs to the complex I 23 kDa subunit family. In terms of assembly, NDH is composed of at least 16 different subunits, 5 of which are encoded in the nucleus. [4Fe-4S] cluster serves as cofactor.

The protein resides in the plastid. Its subcellular location is the chloroplast thylakoid membrane. It carries out the reaction a plastoquinone + NADH + (n+1) H(+)(in) = a plastoquinol + NAD(+) + n H(+)(out). The enzyme catalyses a plastoquinone + NADPH + (n+1) H(+)(in) = a plastoquinol + NADP(+) + n H(+)(out). Its function is as follows. NDH shuttles electrons from NAD(P)H:plastoquinone, via FMN and iron-sulfur (Fe-S) centers, to quinones in the photosynthetic chain and possibly in a chloroplast respiratory chain. The immediate electron acceptor for the enzyme in this species is believed to be plastoquinone. Couples the redox reaction to proton translocation, and thus conserves the redox energy in a proton gradient. This chain is NAD(P)H-quinone oxidoreductase subunit I, chloroplastic, found in Atropa belladonna (Belladonna).